The sequence spans 204 residues: Small ribosomal subunit protein uS4 (204 aa).

An S4 RNA-binding domain is found at 92 to 156 (RRLDALVLRS…SKVPFQVARE (65 aa)).

Belongs to the universal ribosomal protein uS4 family. Part of the 30S ribosomal subunit. Contacts protein S5. The interaction surface between S4 and S5 is involved in control of translational fidelity.

In terms of biological role, one of the primary rRNA binding proteins, it binds directly to 16S rRNA where it nucleates assembly of the body of the 30S subunit. Its function is as follows. With S5 and S12 plays an important role in translational accuracy. In Streptomyces griseus subsp. griseus (strain JCM 4626 / CBS 651.72 / NBRC 13350 / KCC S-0626 / ISP 5235), this protein is Small ribosomal subunit protein uS4.